Reading from the N-terminus, the 157-residue chain is Cyclic pyranopterin monophosphate synthase (157 aa).

Residues 74-76 (MCH) and 112-113 (ME) each bind substrate. The active site involves Asp127.

The protein belongs to the MoaC family. As to quaternary structure, homohexamer; trimer of dimers.

The enzyme catalyses (8S)-3',8-cyclo-7,8-dihydroguanosine 5'-triphosphate = cyclic pyranopterin phosphate + diphosphate. The protein operates within cofactor biosynthesis; molybdopterin biosynthesis. In terms of biological role, catalyzes the conversion of (8S)-3',8-cyclo-7,8-dihydroguanosine 5'-triphosphate to cyclic pyranopterin monophosphate (cPMP). The polypeptide is Cyclic pyranopterin monophosphate synthase (Campylobacter jejuni subsp. jejuni serotype O:2 (strain ATCC 700819 / NCTC 11168)).